The primary structure comprises 294 residues: MTTSGVPFGMTLRPTRSRLSRRTPYSRDRLPPFETETRATILEDHPLLPECNTLTMHNVSYVRGLPCSVGFTLIQEWVVPWDMVLTREELVILRKCMHVCLCCANIDIMTSMMIHGYESWALHCHCSSPGSLQCIAGGQVLASWFRMVVDGAMFNQRFIWYREVVNYNMPKEVMFMSSVFMRGRHLIYLRLWYDGHVGSVVPAMSFGYSALHCGILNNIVVLCCSYCADLSEIRVRCCARRTRRLMLRAVRIIAEETTAMLYSCRTERRRQQFIRALLQHHRPILMHDYDSTPM.

Positions alanine 239–glutamate 255 match the Nuclear localization signal motif.

It belongs to the adenoviridae E4 30 to 34 kDa protein family. As to quaternary structure, interacts with E1B-55k.

Its subcellular location is the host nucleus. The protein resides in the host cytoplasm. Its function is as follows. Plays a major role to prevent cellular inhibition of viral genome replication by nuclear bodies. Assembles an SCF-like E3 ubiquitin ligase complex based on the cellular proteins ELOB, ELOC, CUL5 and RBX1, in cooperation with viral E1B-55K. This viral RING-type ligase ubiquitinates cellular substrates prior to proteasomal degradation: p53/TP53, LIG4, MRE11-RAD50-NBS1 (MRN) complex, ITGA3, DAXX and BLM. In Homo sapiens (Human), this protein is Early 4 ORF6 protein.